The chain runs to 1014 residues: SUMO-specific isopeptidase USPL1 (1014 aa).

Disordered stretches follow at residues Thr-137 to Pro-158 and Glu-275 to Glu-318. The segment covering Glu-275–Leu-289 has biased composition (basic and acidic residues). In terms of domain architecture, USP spans Leu-355–Asp-636. Cys-364 (nucleophile) is an active-site residue. The interval Cys-364–Leu-631 is SUMO-binding. His-592 acts as the Proton acceptor in catalysis. Disordered stretches follow at residues His-794–His-823 and Asn-844–Glu-867. Over residues Ile-802 to Lys-815 the composition is skewed to pro residues.

Belongs to the peptidase C19 family.

The protein resides in the nucleus. It is found in the cajal body. Functionally, SUMO-specific isopeptidase involved in protein desumoylation. Specifically binds SUMO proteins with a higher affinity for sumo2 and sumo3 which it cleaves more efficiently. Also able to process full-length SUMO proteins to their mature forms. Plays a key role in RNA polymerase-II-mediated snRNA transcription in the Cajal bodies. Is a component of complexes that can bind to U snRNA genes. The chain is SUMO-specific isopeptidase USPL1 (uspl1) from Danio rerio (Zebrafish).